The following is a 188-amino-acid chain: Mediator of RNA polymerase II transcription subunit 11 (188 aa).

A coiled-coil region spans residues 46–72 (KNKMEDNANNFKKLITQVENELSAQMQ). Positions 116–188 (DPTSDEPQTT…MTDDDDDMEQ (73 aa)) are disordered. Residues 123 to 141 (QTTEEDEEDGSDDLNEDGA) show a composition bias toward acidic residues. A compositionally biased stretch (low complexity) spans 146 to 155 (SSTVTSSTTD). The segment covering 171-180 (SQEESGRQMT) has biased composition (basic and acidic residues).

Belongs to the Mediator complex subunit 11 family. Component of the Mediator complex.

The protein localises to the nucleus. In terms of biological role, component of the Mediator complex, a coactivator involved in the regulated transcription of nearly all RNA polymerase II-dependent genes. Mediator functions as a bridge to convey information from gene-specific regulatory proteins to the basal RNA polymerase II transcription machinery. Mediator is recruited to promoters by direct interactions with regulatory proteins and serves as a scaffold for the assembly of a functional pre-initiation complex with RNA polymerase II and the general transcription factors. The protein is Mediator of RNA polymerase II transcription subunit 11 (mdt-11) of Caenorhabditis elegans.